Consider the following 409-residue polypeptide: Pyruvate dehydrogenase E1 component subunit alpha, mitochondrial (409 aa).

T6 carries the phosphothreonine modification. Pyruvate contacts are provided by H109, Y135, R136, A174, G182, V184, D213, G214, A215, N242, and Y244. Thiamine diphosphate contacts are provided by Y135 and R136. 6 residues coordinate thiamine diphosphate: G182, V184, D213, G214, A215, and N242. Residue D213 participates in Mg(2+) binding. Mg(2+) is bound by residues N242 and Y244. Y306 bears the Phosphotyrosine mark. H309 is a thiamine diphosphate binding site. S310 and S312 each carry phosphoserine.

In terms of assembly, tetramer of 2 alpha and 2 beta subunits. Thiamine diphosphate is required as a cofactor. The cofactor is Mg(2+).

The protein resides in the mitochondrion matrix. It carries out the reaction N(6)-[(R)-lipoyl]-L-lysyl-[protein] + pyruvate + H(+) = N(6)-[(R)-S(8)-acetyldihydrolipoyl]-L-lysyl-[protein] + CO2. Its activity is regulated as follows. E1 activity is regulated by phosphorylation (inactivation) and dephosphorylation (activation) of the alpha subunit. In terms of biological role, the pyruvate dehydrogenase complex catalyzes the overall conversion of pyruvate to acetyl-CoA and CO(2). It contains multiple copies of three enzymatic components: pyruvate dehydrogenase (E1), dihydrolipoamide acetyltransferase (E2) and lipoamide dehydrogenase (E3). The protein is Pyruvate dehydrogenase E1 component subunit alpha, mitochondrial (pda1) of Schizosaccharomyces pombe (strain 972 / ATCC 24843) (Fission yeast).